Consider the following 479-residue polypeptide: Anaerobic nitric oxide reductase flavorubredoxin (479 aa).

A zinc metallo-hydrolase region spans residues 30 to 210 (LRGSSYNSYL…PFSRLVTPKI (181 aa)). H79, E81, D83, H147, D166, and H227 together coordinate Fe cation. In terms of domain architecture, Flavodoxin-like spans 254 to 393 (ITIFYDTMSN…LCRQHGRDIA (140 aa)). Residues 260 to 264 (TMSNN) and 342 to 369 (AFGSHGWSGGAVDRLSTRLQDAGFEMSL) each bind FMN. One can recognise a Rubredoxin-like domain in the interval 423–474 (GPKMQCSVCQWIYDPAQGEPLQDVAPGTPWSDVPDNFLCPECSLGKDVFDVL). Fe cation is bound by residues C428, C431, C461, and C464.

The protein in the N-terminal section; belongs to the zinc metallo-hydrolase group 3 family. As to quaternary structure, homotetramer. Fe cation is required as a cofactor. Requires FMN as cofactor.

The protein localises to the cytoplasm. It functions in the pathway nitrogen metabolism; nitric oxide reduction. Functionally, anaerobic nitric oxide reductase; uses NADH to detoxify nitric oxide (NO), protecting several 4Fe-4S NO-sensitive enzymes. Has at least 2 reductase partners, only one of which (NorW, flavorubredoxin reductase) has been identified. NO probably binds to the di-iron center; electrons enter from the NorW at rubredoxin and are transferred sequentially to the FMN center and the di-iron center. Also able to function as an aerobic oxygen reductase. The polypeptide is Anaerobic nitric oxide reductase flavorubredoxin (Salmonella choleraesuis (strain SC-B67)).